Reading from the N-terminus, the 337-residue chain is uncharacterized protein (337 aa).

The ABC transporter domain occupies 5–235 (VEFDNVSRLY…PRTPFVAGFV (231 aa)). 37-44 (GPSGSGKT) is a binding site for ATP.

Belongs to the ABC transporter superfamily.

Probably part of the ABC transporter complex YdcSTUV. Probably responsible for energy coupling to the transport system. This is an uncharacterized protein from Escherichia coli (strain K12).